Consider the following 50-residue polypeptide: Large ribosomal subunit protein bL33B (50 aa).

Belongs to the bacterial ribosomal protein bL33 family.

This is Large ribosomal subunit protein bL33B from Streptococcus pyogenes serotype M1.